Here is a 725-residue protein sequence, read N- to C-terminus: Methionine--tRNA ligase (725 aa).

Residues 27–37 (PYANGQIHIGH) carry the 'HIGH' region motif. Zn(2+)-binding residues include C158, C161, C171, and C174. The 'KMSKS' region motif lies at 348–352 (KMSKS). An ATP-binding site is contributed by K351. Positions 619-725 (DFAKIDLRIA…SGAKPGMRVK (107 aa)) constitute a tRNA-binding domain.

It belongs to the class-I aminoacyl-tRNA synthetase family. MetG type 1 subfamily. In terms of assembly, homodimer. It depends on Zn(2+) as a cofactor.

The protein resides in the cytoplasm. The catalysed reaction is tRNA(Met) + L-methionine + ATP = L-methionyl-tRNA(Met) + AMP + diphosphate. Is required not only for elongation of protein synthesis but also for the initiation of all mRNA translation through initiator tRNA(fMet) aminoacylation. The sequence is that of Methionine--tRNA ligase from Burkholderia mallei (strain NCTC 10247).